The sequence spans 341 residues: MSITPQEALQRCIEHRELFHDEMTDMMRLIMSGEMAPELVAGLLVALRTKKETVGEIAAAAQVMREFATSVHIDDRSHLVDVVGTGGDGAHTFNISTAAMFVAAAAGAKIAKHGNRSVSSKSGSADVLEALGANLALSAEQVAKCISTVGAGFMFAPNHHPAMKNVVPIRKQLGVRTIFNILGPLTNPADAKRILMGVFHADLVGIQARVLQALGMEHALVVYGRDGLDEISLEGPTLVGELKDGVVREYEIHPKDFGLHTAPTNSFKVANAEESKRIVLDVIDNKPSAASDIVCLNAGATLYVAGIAPDIASGIAKAKAAIASGAARQKLDAFVAASQSN.

5-phospho-alpha-D-ribose 1-diphosphate is bound by residues Gly-84, 87 to 88 (GD), Thr-92, 94 to 97 (NIST), 112 to 120 (KHGNRSVSS), and Ser-124. An anthranilate-binding site is contributed by Gly-84. Residue Ser-96 participates in Mg(2+) binding. Asn-115 contributes to the anthranilate binding site. Position 170 (Arg-170) interacts with anthranilate. Residues Asp-229 and Glu-230 each coordinate Mg(2+).

This sequence belongs to the anthranilate phosphoribosyltransferase family. In terms of assembly, homodimer. The cofactor is Mg(2+).

It carries out the reaction N-(5-phospho-beta-D-ribosyl)anthranilate + diphosphate = 5-phospho-alpha-D-ribose 1-diphosphate + anthranilate. The protein operates within amino-acid biosynthesis; L-tryptophan biosynthesis; L-tryptophan from chorismate: step 2/5. Functionally, catalyzes the transfer of the phosphoribosyl group of 5-phosphorylribose-1-pyrophosphate (PRPP) to anthranilate to yield N-(5'-phosphoribosyl)-anthranilate (PRA). The chain is Anthranilate phosphoribosyltransferase from Polynucleobacter asymbioticus (strain DSM 18221 / CIP 109841 / QLW-P1DMWA-1) (Polynucleobacter necessarius subsp. asymbioticus).